Reading from the N-terminus, the 901-residue chain is Alpha-actinin-3 (901 aa).

M1 carries the N-acetylmethionine modification. The segment at 1–261 (MMMVLQPEGL…IMTYVSCFYH (261 aa)) is actin-binding. 2 consecutive Calponin-homology (CH) domains span residues 45 to 149 (KQQR…LRFA) and 158 to 264 (TSAK…HAFA). 4 Spectrin repeats span residues 288–398 (KLME…WLLS), 408–513 (HLAE…ALER), 523–634 (QLQL…MLQE), and 644–747 (RLRR…EVEN). EF-hand domains follow at residues 760–795 (EQLN…MGYD) and 796–831 (LGEV…ETAE). 6 residues coordinate Ca(2+): D773, N777, M779, D784, D809, and N811.

The protein belongs to the alpha-actinin family. Homodimer; antiparallel. Also forms heterodimers with ACTN2. Interacts with MYOZ1.

In terms of biological role, F-actin cross-linking protein which is thought to anchor actin to a variety of intracellular structures. This is a bundling protein. The chain is Alpha-actinin-3 (ACTN3) from Bos taurus (Bovine).